A 642-amino-acid chain; its full sequence is Threonine--tRNA ligase (642 aa).

The TGS domain occupies 1–61; the sequence is MPIITLPDGS…SEDANLEIIT (61 aa). The interval 243 to 534 is catalytic; sequence DHRKIGKALN…ITEEYAGFFP (292 aa). Positions 334, 385, and 511 each coordinate Zn(2+).

The protein belongs to the class-II aminoacyl-tRNA synthetase family. As to quaternary structure, homodimer. Zn(2+) serves as cofactor.

Its subcellular location is the cytoplasm. It catalyses the reaction tRNA(Thr) + L-threonine + ATP = L-threonyl-tRNA(Thr) + AMP + diphosphate + H(+). In terms of biological role, catalyzes the attachment of threonine to tRNA(Thr) in a two-step reaction: L-threonine is first activated by ATP to form Thr-AMP and then transferred to the acceptor end of tRNA(Thr). Also edits incorrectly charged L-seryl-tRNA(Thr). The polypeptide is Threonine--tRNA ligase (Histophilus somni (strain 2336) (Haemophilus somnus)).